The sequence spans 282 residues: Energy-coupling factor transporter ATP-binding protein EcfA2 (282 aa).

The ABC transporter domain occupies 1–234; sequence MKGSPFEKVA…ADELVALGLD (234 aa). 28–35 is a binding site for ATP; that stretch reads GHTGSGKS.

It belongs to the ABC transporter superfamily. Energy-coupling factor EcfA family. Forms a stable energy-coupling factor (ECF) transporter complex composed of 2 membrane-embedded substrate-binding proteins (S component), 2 ATP-binding proteins (A component) and 2 transmembrane proteins (T component).

The protein resides in the cell membrane. Its function is as follows. ATP-binding (A) component of a common energy-coupling factor (ECF) ABC-transporter complex. Unlike classic ABC transporters this ECF transporter provides the energy necessary to transport a number of different substrates. The sequence is that of Energy-coupling factor transporter ATP-binding protein EcfA2 from Halalkalibacterium halodurans (strain ATCC BAA-125 / DSM 18197 / FERM 7344 / JCM 9153 / C-125) (Bacillus halodurans).